Consider the following 338-residue polypeptide: Bifunctional methylenetetrahydrofolate dehydrogenase/cyclohydrolase 2, mitochondrial (338 aa).

Substrate is bound by residues 89 to 93 (YVRNK) and 136 to 138 (VQL). Residues 205-207 (GRS) and arginine 238 each bind NAD(+). 314 to 318 (PGGVG) serves as a coordination point for substrate.

This sequence belongs to the tetrahydrofolate dehydrogenase/cyclohydrolase family. The cofactor is Mg(2+). Widely expressed.

It is found in the mitochondrion inner membrane. The enzyme catalyses (6R)-5,10-methylene-5,6,7,8-tetrahydrofolate + NAD(+) = (6R)-5,10-methenyltetrahydrofolate + NADH. It catalyses the reaction (6R)-5,10-methenyltetrahydrofolate + H2O = (6R)-10-formyltetrahydrofolate + H(+). The catalysed reaction is (6R)-5,10-methylene-5,6,7,8-tetrahydrofolate + NADP(+) = (6R)-5,10-methenyltetrahydrofolate + NADPH. The protein operates within one-carbon metabolism; tetrahydrofolate interconversion. Bifunctional mitochondrial folate-interconverting enzyme that has both NAD/NADP-dependent methylenetetrahydrofolate dehydrogenase and methenyltetrahydrofolate cyclohydrolase activities. This Mus musculus (Mouse) protein is Bifunctional methylenetetrahydrofolate dehydrogenase/cyclohydrolase 2, mitochondrial.